We begin with the raw amino-acid sequence, 194 residues long: Phosphoheptose isomerase (194 aa).

One can recognise an SIS domain in the interval 37–194 (ISNSFKQGGK…LIEFEMAKQA (158 aa)). Substrate is bound at residue 52–54 (NGG). Residues H61 and E65 each contribute to the Zn(2+) site. Residues E65, 93–94 (ND), 119–121 (STS), S124, and Q172 each bind substrate. Q172 and H180 together coordinate Zn(2+).

Belongs to the SIS family. GmhA subfamily. Homotetramer. Zn(2+) serves as cofactor.

It localises to the cytoplasm. It carries out the reaction 2 D-sedoheptulose 7-phosphate = D-glycero-alpha-D-manno-heptose 7-phosphate + D-glycero-beta-D-manno-heptose 7-phosphate. It participates in carbohydrate biosynthesis; D-glycero-D-manno-heptose 7-phosphate biosynthesis; D-glycero-alpha-D-manno-heptose 7-phosphate and D-glycero-beta-D-manno-heptose 7-phosphate from sedoheptulose 7-phosphate: step 1/1. In terms of biological role, catalyzes the isomerization of sedoheptulose 7-phosphate in D-glycero-D-manno-heptose 7-phosphate. The polypeptide is Phosphoheptose isomerase (Haemophilus influenzae (strain 86-028NP)).